The following is a 1131-amino-acid chain: Filamin A-interacting protein 1-like (1131 aa).

Residues 1 to 62 (MRSRSSNAEG…KSHTGKGHHT (62 aa)) form a disordered region. Positions 50–62 (VSEKSHTGKGHHT) are enriched in basic and acidic residues. Coiled-coil stretches lie at residues 139–583 (NELD…LSKV) and 610–780 (SKST…KSLR). The residue at position 789 (S789) is a Phosphoserine. Phosphothreonine is present on residues T984 and T992. A Phosphoserine modification is found at S1050.

It belongs to the FILIP1 family.

It is found in the cytoplasm. Its subcellular location is the membrane. The protein resides in the nucleus. Functionally, acts as a regulator of the antiangiogenic activity on endothelial cells. When overexpressed in endothelial cells, leads to inhibition of cell proliferation and migration and an increase in apoptosis. Inhibits melanoma growth When expressed in tumor-associated vasculature. The protein is Filamin A-interacting protein 1-like (Filip1l) of Mus musculus (Mouse).